Consider the following 335-residue polypeptide: Transcriptional activator NphR (335 aa).

The region spanning 231 to 329 (TRVQRVIEQN…GSSPGLYRKE (99 aa)) is the HTH araC/xylS-type domain. DNA-binding regions (H-T-H motif) lie at residues 249–270 (SDIAAAAGMSLRTVHKLFNAEG) and 296–319 (VADVSECAGFRDVSHFSRLFRSTF).

Functionally, transcriptional activator of nphA1 and nphA2 involved in the degradation of 4-nitrophenol (4-NP). This is Transcriptional activator NphR (nphR) from Rhodococcus sp.